A 1582-amino-acid chain; its full sequence is Adhesion G protein-coupled receptor B1 (1582 aa).

Positions 1–33 are cleaved as a signal peptide; the sequence is MRGQAAAPGPIWILAPLLLLLLLLGRWARAASG. Residues 34–948 are Extracellular-facing; it reads ADIGPGTEQC…ATMDKVTVPS (915 aa). A glycan (N-linked (GlcNAc...) asparagine) is linked at asparagine 64. A TSP type-1 1 domain is found at 261–315; it reads AGGWKLWSLWGECTRDCGGGLQTRTRTCLPTLGVEGGGCEGVLEEGRLCNRKACG. 3 disulfide bridges follow: cysteine 273/cysteine 309, cysteine 277/cysteine 314, and cysteine 288/cysteine 299. A disordered region spans residues 313 to 335; that stretch reads ACGPTGRSSSRSQSLRSTDARRR. A compositionally biased stretch (low complexity) spans 319–329; that stretch reads RSSSRSQSLRS. TSP type-1 domains follow at residues 354-407, 409-462, 467-520, and 522-575; these read DPAA…AVCP, HGAW…ALCP, DGNW…QQCP, and DGKW…QRCP. 14 disulfide bridges follow: cysteine 366–cysteine 400, cysteine 370–cysteine 406, cysteine 381–cysteine 390, cysteine 421–cysteine 456, cysteine 425–cysteine 461, cysteine 436–cysteine 446, cysteine 479–cysteine 514, cysteine 483–cysteine 519, cysteine 494–cysteine 504, cysteine 534–cysteine 569, cysteine 538–cysteine 574, cysteine 549–cysteine 559, cysteine 581–cysteine 616, and cysteine 604–cysteine 634. N-linked (GlcNAc...) asparagine glycosylation occurs at asparagine 401. Asparagine 607 carries N-linked (GlcNAc...) asparagine glycosylation. A Phosphothreonine modification is found at threonine 609. Residues asparagine 692, asparagine 844, asparagine 877, and asparagine 881 are each glycosylated (N-linked (GlcNAc...) asparagine). In terms of domain architecture, GAIN-B spans 760 to 939; the sequence is RDAYQVTDNL…AILAQLSADA (180 aa). Disulfide bonds link cysteine 884–cysteine 921 and cysteine 909–cysteine 923. The tract at residues 884 to 939 is GPS; sequence CILWDETDGPSSSAPPQLGPWSWRGCRTVPLDALRTRCLCDRLSTFAILAQLSADA. An N-terminal stalk following vasculostatin-120 cleavage which is not required for signaling activity region spans residues 927–943; it reads STFAILAQLSADATMDK. A helical membrane pass occupies residues 949–969; sequence VTLIVGCGVSSLTLLMLVIIY. Over 970–980 the chain is Cytoplasmic; sequence VSVWRYIRSER. A helical transmembrane segment spans residues 981-1001; the sequence is SVILINFCLSIISSNALILIG. Topologically, residues 1002–1008 are extracellular; the sequence is QTQTRNK. The chain crosses the membrane as a helical span at residues 1009–1029; sequence VVCTLVAAFLHFFFLSSFCWV. At 1030–1052 the chain is on the cytoplasmic side; it reads LTEAWQSYMAVTGRLRSRLVRKR. Residues 1053–1073 traverse the membrane as a helical segment; it reads FLCLGWGLPALVVAISVGFTK. At 1074–1093 the chain is on the extracellular side; the sequence is AKGYSTMNYCWLSLEGGLLY. The chain crosses the membrane as a helical span at residues 1094–1114; that stretch reads AFVGPAAAVVLVNMVIGILVF. The Cytoplasmic segment spans residues 1115–1136; the sequence is NKLVSKDGITDKKLKERAGASL. A helical transmembrane segment spans residues 1137-1157; that stretch reads WSSCVVLPLLALTWMSAVLAV. The Extracellular portion of the chain corresponds to 1158-1166; that stretch reads TDRRSALFQ. A helical transmembrane segment spans residues 1167–1187; sequence ILFAVFDSLEGFVIVMVHCIL. Topologically, residues 1188–1582 are cytoplasmic; sequence RREVQDAVKC…QDIIDLQTEV (395 aa). The tract at residues 1363 to 1582 is involved in interaction with MAGI1; that stretch reads YSINIDQMPQ…QDIIDLQTEV (220 aa). Residues 1382 to 1549 form a disordered region; it reads PDASFPTRSP…AWVKKELEPL (168 aa). Residues 1389–1435 are compositionally biased toward pro residues; sequence RSPPAREPPGGAPPEVPPVQPPPPPPPPPPPPQQPIPPPPTLEPAPP. Residues 1441–1455 are compositionally biased toward low complexity; sequence GEPAAHPGPSSGAGA. Serine 1467 carries the phosphoserine modification. 2 stretches are compositionally biased toward basic and acidic residues: residues 1468-1484 and 1491-1520; these read LERR…EKIM and QDMF…KPEK. Positions 1579–1582 are indispensable for interaction with MAGI1; it reads QTEV.

This sequence belongs to the G-protein coupled receptor 2 family. LN-TM7 subfamily. In terms of assembly, interacts with ELMO1 and DOCK1. When bound to ELMO1 and DOCK1, acts as a module to promote apoptotic cell engulfment. Interacts with MDM2; the interaction results in inhibition of MDM2-mediated ubiquitination and degradation of DLG4/PSD95. Interacts with PARD3 and TIAM1; the interaction is required for correct dendritic localization of PARD3 and TIAM1 and for dendritic spine formation. Interacts with MAGI1, MAGI3 and BAIAP2. Interacts with PHYHIP. Interacts with DLG4 (via PDZ domain). Vasculostatin-120: Interacts with CD36. Vasculostatin-120: Interacts with ARRB2. Interacts with BAIAP3; this interaction is direct. In terms of processing, proteolytically cleaved to produce vasculostatin-40 and vasculostatin-120. Vasculostatin-40 is the major form and is produced through proteolytic cleavage by MMP14 between residues 321 and 329 with cleavage likely to be between Ser-326 and Leu-327. Post-translationally, ubiquitinated. In brain, widespread expression in all neuropil-rich zones including spinal cord gray matter, cerebellar molecular layer, cerebral cortex, thalamic nuclei and basal ganglia with no expression in white matter (at protein level). In the cerebellar molecular layer, highly expressed in interneuron processes whereas Purkinje cells and their dendrites show weaker expression (at protein level). In the olfactory bulb, highly expressed in glomeruli (at protein level). In the retina, highly concentrated in the outer and inner plexiform layers (at protein level). Expressed in brain. Enriched in hippocampus and cortex. Also detected in other tissues including bone marrow and spleen.

It is found in the cell membrane. Its subcellular location is the cell projection. The protein resides in the phagocytic cup. It localises to the cell junction. The protein localises to the focal adhesion. It is found in the dendritic spine. Its subcellular location is the postsynaptic density. The protein resides in the secreted. Its function is as follows. Phosphatidylserine receptor which enhances the engulfment of apoptotic cells. Also mediates the binding and engulfment of Gram-negative bacteria. Stimulates production of reactive oxygen species by macrophages in response to Gram-negative bacteria, resulting in enhanced microbicidal macrophage activity. In the gastric mucosa, required for recognition and engulfment of apoptotic gastric epithelial cells. Promotes myoblast fusion. Activates the Rho pathway in a G-protein-dependent manner. Inhibits MDM2-mediated ubiquitination and degradation of DLG4/PSD95, promoting DLG4 stability and regulating synaptic plasticity. Required for the formation of dendritic spines by ensuring the correct localization of PARD3 and TIAM1. Potent inhibitor of angiogenesis in brain and may play a significant role as a mediator of the p53/TP53 signal in suppression of glioblastoma. Functionally, inhibits angiogenesis in a CD36-dependent manner. Inhibits angiogenesis. The polypeptide is Adhesion G protein-coupled receptor B1 (Mus musculus (Mouse)).